A 351-amino-acid chain; its full sequence is S-adenosylmethionine:tRNA ribosyltransferase-isomerase (351 aa).

Belongs to the QueA family. Monomer.

It localises to the cytoplasm. It carries out the reaction 7-aminomethyl-7-carbaguanosine(34) in tRNA + S-adenosyl-L-methionine = epoxyqueuosine(34) in tRNA + adenine + L-methionine + 2 H(+). Its pathway is tRNA modification; tRNA-queuosine biosynthesis. In terms of biological role, transfers and isomerizes the ribose moiety from AdoMet to the 7-aminomethyl group of 7-deazaguanine (preQ1-tRNA) to give epoxyqueuosine (oQ-tRNA). The protein is S-adenosylmethionine:tRNA ribosyltransferase-isomerase of Sphingopyxis alaskensis (strain DSM 13593 / LMG 18877 / RB2256) (Sphingomonas alaskensis).